Consider the following 393-residue polypeptide: Cytochrome b (393 aa).

Transmembrane regions (helical) follow at residues 32-52 (FGSL…TLAM), 76-98 (WLIR…LHMG), 113-133 (VWTL…LGYV), and 179-199 (FFAL…MHLI). 2 residues coordinate heme b: histidine 82 and histidine 96. Heme b is bound by residues histidine 183 and histidine 197. Residue histidine 202 coordinates a ubiquinone. The next 4 membrane-spanning stretches (helical) occupy residues 226 to 246 (FIFK…IFVF), 290 to 310 (LLGV…PFTD), 322 to 342 (LSKI…KLGA), and 349 to 369 (FIEF…IIVP).

It belongs to the cytochrome b family. As to quaternary structure, fungal cytochrome b-c1 complex contains 10 subunits; 3 respiratory subunits, 2 core proteins and 5 low-molecular weight proteins. Cytochrome b-c1 complex is a homodimer. The cofactor is heme b.

Its subcellular location is the mitochondrion inner membrane. In terms of biological role, component of the ubiquinol-cytochrome c reductase complex (complex III or cytochrome b-c1 complex) that is part of the mitochondrial respiratory chain. The b-c1 complex mediates electron transfer from ubiquinol to cytochrome c. Contributes to the generation of a proton gradient across the mitochondrial membrane that is then used for ATP synthesis. This is Cytochrome b (COB) from Venturia inaequalis (Apple scab fungus).